The following is a 184-amino-acid chain: Der GTPase-activating protein YihI (184 aa).

Residues Met1–Pro107 are disordered. Basic and acidic residues predominate over residues Thr21–Arg32. Over residues Ser80 to Val95 the composition is skewed to low complexity.

The protein belongs to the YihI family. As to quaternary structure, interacts with Der.

Functionally, a GTPase-activating protein (GAP) that modifies Der/EngA GTPase function. May play a role in ribosome biogenesis. In Pectobacterium carotovorum subsp. carotovorum (strain PC1), this protein is Der GTPase-activating protein YihI.